We begin with the raw amino-acid sequence, 226 residues long: Protein B (226 aa).

The segment at 37–100 (DNVQGTDYEK…FSTQHLANKV (64 aa)) is igG constant region-binding. 3 repeats span residues 158 to 168 (TKSKLDKEIWN), 169 to 179 (TRFTRDKKVLN), and 180 to 190 (VKEFKVYNTLN).

The protein resides in the secreted. Its function is as follows. Protein B belongs to the group of bacterial Fc-binding protein. This Streptococcus agalactiae protein is Protein B.